A 319-amino-acid chain; its full sequence is Cytochrome c biogenesis protein CcsA (319 aa).

The next 7 helical transmembrane spans lie at 9-29 (ILTH…LITL), 44-64 (GVIG…AYSG), 71-91 (LYES…FPYL), 143-163 (MVLG…LLVI), 225-245 (IISL…VWAN), 259-273 (TWAF…IYLH), and 286-306 (AIVA…VNLL).

It belongs to the CcmF/CycK/Ccl1/NrfE/CcsA family. As to quaternary structure, may interact with Ccs1.

The protein localises to the plastid. The protein resides in the chloroplast thylakoid membrane. Functionally, required during biogenesis of c-type cytochromes (cytochrome c6 and cytochrome f) at the step of heme attachment. This is Cytochrome c biogenesis protein CcsA from Oenothera argillicola (Appalachian evening primrose).